The primary structure comprises 489 residues: Heme-based aerotactic transducer HemAT (489 aa).

The region spanning 218–454 (PLSSLEATSQ…EVAEMVDDVD (237 aa)) is the Methyl-accepting transducer domain.

It belongs to the methyl-accepting chemotaxis (MCP) protein family. In terms of assembly, homotetramer.

In terms of biological role, heme-containing signal transducer responsible for aerotaxis, the migratory response toward or away from oxygen. The protein is Heme-based aerotactic transducer HemAT (hemAT) of Halobacterium salinarum (strain ATCC 700922 / JCM 11081 / NRC-1) (Halobacterium halobium).